The sequence spans 215 residues: GTP-binding nuclear protein Ran (215 aa).

The Small GTPase Ran-type domain occupies 6 to 170; the sequence is DIPTFKLVLV…LWLARKLLGD (165 aa). Residues 17–24, 35–41, Gly67, 121–124, and 149–151 contribute to the GTP site; these read DGGTGKTT, EKKYVAT, NKVD, and SAK. The segment at 36 to 44 is switch-I; it reads KKYVATLGV. The segment at 67–83 is switch-II; that stretch reads GQEKFGGLRDGYYIQGQ.

The protein belongs to the small GTPase superfamily. Ran family. In terms of assembly, found in a nuclear export complex with RanGTP, exportin and pre-miRNA.

The protein localises to the nucleus. Its function is as follows. GTP-binding protein involved in nucleocytoplasmic transport. Required for the import of protein into the nucleus and also for RNA export. Involved in chromatin condensation and control of cell cycle. The chain is GTP-binding nuclear protein Ran from Brugia malayi (Filarial nematode worm).